The sequence spans 363 residues: Fructose-bisphosphate aldolase (363 aa).

2 residues coordinate substrate: arginine 56 and lysine 147. Catalysis depends on glutamate 188, which acts as the Proton acceptor. Catalysis depends on lysine 230, which acts as the Schiff-base intermediate with dihydroxyacetone-P.

This sequence belongs to the class I fructose-bisphosphate aldolase family.

It carries out the reaction beta-D-fructose 1,6-bisphosphate = D-glyceraldehyde 3-phosphate + dihydroxyacetone phosphate. The protein operates within carbohydrate degradation; glycolysis; D-glyceraldehyde 3-phosphate and glycerone phosphate from D-glucose: step 4/4. This is Fructose-bisphosphate aldolase (FBPA) from Echinococcus multilocularis (Fox tapeworm).